The following is a 1969-amino-acid chain: Protein mono-ADP-ribosyltransferase PARP4 (1969 aa).

Residues 1-94 (MTLGIFANCI…RLLDVRNYDP (94 aa)) enclose the BRCT domain. The Nuclear localization signal motif lies at 19–25 (PRQQKKK). Residues 92–132 (YDPLSPAPAAPPAERSRSEVQSEYLPSDNTPEKENTEVTEV) form a disordered region. Residues 235–363 (SEKLQALLLE…ETNLSKPNPP (129 aa)) enclose the PARP alpha-helical domain. One can recognise a PARP catalytic domain in the interval 362-566 (PPSLAKYRAL…FCTPGDQIKE (205 aa)). One can recognise a VIT domain in the interval 600 to 728 (TNIKAGLQDA…KVLIKITYIT (129 aa)). Residues 869–1039 (EVIICLDCSS…KQIEAQMTRI (171 aa)) enclose the VWFA domain. Phosphoserine is present on Ser-1229. A Nuclear localization signal motif is present at residues 1230 to 1242 (DGHGVLQPVSVSS). Pro residues-rich tracts occupy residues 1372 to 1387 (PPHP…PLPL), 1402 to 1417 (HPPP…PPPS), 1425 to 1444 (LPPP…PPIP), 1485 to 1513 (LPPP…PPPS), and 1521 to 1540 (LPPP…PPIP). Positions 1372–1608 (PPHPLGGTHP…AGTQFSLSPI (237 aa)) are disordered. Positions 1443-1541 (IPGGTLIPPS…HIPPPPPIPG (99 aa)) constitute an FH1 domain. The span at 1541-1556 (GGTLIPSPSSLFGGTH) shows a compositional bias: low complexity. The span at 1557–1585 (LPPPPLLPAGTHIPPPPPITGSTHPPPPS) shows a compositional bias: pro residues. The interval 1808–1969 (FCDEDQESPV…LHRILYYSQG (162 aa)) is interaction with the major vault protein.

It belongs to the ARTD/PARP family. In terms of assembly, component of the vault ribonucleoprotein particle, at least composed of MVP, PARP4 and one or more vault RNAs (vRNAs). Interacts with TEP1.

It is found in the cytoplasm. The protein localises to the nucleus. The catalysed reaction is L-aspartyl-[protein] + NAD(+) = 4-O-(ADP-D-ribosyl)-L-aspartyl-[protein] + nicotinamide. It carries out the reaction L-glutamyl-[protein] + NAD(+) = 5-O-(ADP-D-ribosyl)-L-glutamyl-[protein] + nicotinamide. Its function is as follows. Mono-ADP-ribosyltransferase that mediates mono-ADP-ribosylation of target proteins. This Mus musculus (Mouse) protein is Protein mono-ADP-ribosyltransferase PARP4.